The primary structure comprises 347 residues: Tsukushi (347 aa).

The first 19 residues, 1 to 19 (MASLLCLFFSLLGLAAIGA), serve as a signal peptide directing secretion. Residues 20 to 61 (VKNCHPQCRCEVETFGLFDSFSLTKVDCSRIGPGNTPVPIPL) enclose the LRRNT domain. LRR repeat units lie at residues 62–83 (DTSH…MLSG), 88–109 (TLVS…AFSK), 112–133 (YLET…CFTG), 135–156 (PLVE…LFTT), 160–175 (DLPI…LTSI), 185–205 (YIKS…LNGI), 206–227 (PLQY…AFDS), 230–252 (ELVH…AFRS), 255–277 (NLQA…VFSG), and 280–301 (SLQE…VFMQ). An N-linked (GlcNAc...) asparagine glycan is attached at N285.

In terms of assembly, forms a ternary complex with chordin/CHRD and BMP4.

The protein resides in the secreted. In terms of biological role, contributes to various developmental events through its interactions with multiple signaling pathways. Dorsalizing factor which functions as an inhibitor of bone morphogenetic proteins during gastrulation. This chain is Tsukushi (tsku), found in Danio rerio (Zebrafish).